The chain runs to 211 residues: Peptidyl-prolyl cis-trans isomerase-like 3 (211 aa).

The PPIase cyclophilin-type domain occupies 1–204 (MSVTLHTTHG…ETLRINRVTI (204 aa)).

The protein belongs to the cyclophilin-type PPIase family. PPIL3 subfamily.

It catalyses the reaction [protein]-peptidylproline (omega=180) = [protein]-peptidylproline (omega=0). Functionally, PPIases accelerate the folding of proteins. It catalyzes the cis-trans isomerization of proline imidic peptide bonds in oligopeptides. The polypeptide is Peptidyl-prolyl cis-trans isomerase-like 3 (cyp10) (Emericella nidulans (strain FGSC A4 / ATCC 38163 / CBS 112.46 / NRRL 194 / M139) (Aspergillus nidulans)).